Consider the following 497-residue polypeptide: Glycerol kinase (497 aa).

Thr-12 is an ADP binding site. Positions 12, 13, and 14 each coordinate ATP. Sn-glycerol 3-phosphate is bound at residue Thr-12. Arg-16 serves as a coordination point for ADP. Sn-glycerol 3-phosphate contacts are provided by Arg-82, Glu-83, Tyr-134, and Asp-243. Glycerol contacts are provided by Arg-82, Glu-83, Tyr-134, Asp-243, and Gln-244. ADP-binding residues include Thr-265 and Gly-308. Positions 265, 308, 312, and 409 each coordinate ATP. ADP-binding residues include Gly-409 and Asn-413.

It belongs to the FGGY kinase family.

It carries out the reaction glycerol + ATP = sn-glycerol 3-phosphate + ADP + H(+). It participates in polyol metabolism; glycerol degradation via glycerol kinase pathway; sn-glycerol 3-phosphate from glycerol: step 1/1. Its activity is regulated as follows. Inhibited by fructose 1,6-bisphosphate (FBP). Key enzyme in the regulation of glycerol uptake and metabolism. Catalyzes the phosphorylation of glycerol to yield sn-glycerol 3-phosphate. This Nitratidesulfovibrio vulgaris (strain ATCC 29579 / DSM 644 / CCUG 34227 / NCIMB 8303 / VKM B-1760 / Hildenborough) (Desulfovibrio vulgaris) protein is Glycerol kinase.